The sequence spans 381 residues: Chaperone protein DnaJ (381 aa).

Residues 5–70 (DYYEVLGVSR…DKKAAYDRYG (66 aa)) form the J domain. The segment at 140-218 (GVQKTINVPA…CHGAGRVEKE (79 aa)) adopts a CR-type zinc-finger fold. C153, C156, C170, C173, C192, C195, C206, and C209 together coordinate Zn(2+). CXXCXGXG motif repeat units lie at residues 153-160 (CDACKGTG), 170-177 (CPTCSGMG), 192-199 (CPTCNGMG), and 206-213 (CKVCHGAG).

Belongs to the DnaJ family. As to quaternary structure, homodimer. The cofactor is Zn(2+).

It is found in the cytoplasm. In terms of biological role, participates actively in the response to hyperosmotic and heat shock by preventing the aggregation of stress-denatured proteins and by disaggregating proteins, also in an autonomous, DnaK-independent fashion. Unfolded proteins bind initially to DnaJ; upon interaction with the DnaJ-bound protein, DnaK hydrolyzes its bound ATP, resulting in the formation of a stable complex. GrpE releases ADP from DnaK; ATP binding to DnaK triggers the release of the substrate protein, thus completing the reaction cycle. Several rounds of ATP-dependent interactions between DnaJ, DnaK and GrpE are required for fully efficient folding. Also involved, together with DnaK and GrpE, in the DNA replication of plasmids through activation of initiation proteins. This Cereibacter sphaeroides (strain KD131 / KCTC 12085) (Rhodobacter sphaeroides) protein is Chaperone protein DnaJ.